A 414-amino-acid polypeptide reads, in one-letter code: Probable cytochrome P450 127A1 (414 aa).

Cys-364 lines the heme pocket.

Belongs to the cytochrome P450 family. Heme is required as a cofactor.

Functionally, cytochromes P450 are a group of heme-thiolate monooxygenases. They oxidize a variety of structurally unrelated compounds, including steroids, fatty acids, and xenobiotics. This Sinorhizobium fredii (strain NBRC 101917 / NGR234) protein is Probable cytochrome P450 127A1 (cyp127A1).